The chain runs to 454 residues: tRNA modification GTPase MnmE (454 aa).

Positions 23, 80, and 120 each coordinate (6S)-5-formyl-5,6,7,8-tetrahydrofolate. One can recognise a TrmE-type G domain in the interval 216–377; sequence GMKVVIAGRP…LRNHLKQSMG (162 aa). Residue Asn226 coordinates K(+). GTP-binding positions include 226 to 231, 245 to 251, 270 to 273, 335 to 338, and 358 to 360; these read NAGKSS, TDIAGTT, DTAG, NKAD, and SAR. Ser230 lines the Mg(2+) pocket. Positions 245, 247, and 250 each coordinate K(+). Residue Thr251 coordinates Mg(2+). Lys454 is a (6S)-5-formyl-5,6,7,8-tetrahydrofolate binding site.

It belongs to the TRAFAC class TrmE-Era-EngA-EngB-Septin-like GTPase superfamily. TrmE GTPase family. In terms of assembly, homodimer. Heterotetramer of two MnmE and two MnmG subunits. Requires K(+) as cofactor.

The protein localises to the cytoplasm. In terms of biological role, exhibits a very high intrinsic GTPase hydrolysis rate. Involved in the addition of a carboxymethylaminomethyl (cmnm) group at the wobble position (U34) of certain tRNAs, forming tRNA-cmnm(5)s(2)U34. This chain is tRNA modification GTPase MnmE, found in Escherichia coli (strain SMS-3-5 / SECEC).